The chain runs to 447 residues: MSQDVREVNFDGLVGPTHNYAGLAHGNVASMRHGGLTANPREAALQGLAKMKSLMEAGFAQGVLPPQQRPDLGALRDLGFTGDDAGVLAQAARQAPQLLRAVCSASSMWTANAATVTPSLDAPDGRVHFTAANLQSSFHRYLEPRTTARVLAAMFHDPAHFAHHPVLPATPTFSDEGAANHTRLCGDHDEPGVHLYVYGRQAFGGEHGPKRYPARQTLEASQAIARQHGLDDTRTVFAQQHPDAIDAGVFHNDVIAVGNGPVLLYHEMAFRDETATLEALRARMSTPLIPVRVPSEAISLEDAVATYLFNSQLLSNPDGSMTLVVPGECQENETVWRTIQDLLLGGNNPISEVLVKDVKQSMRNGGGPACLRLRVALAARERQALTGRVLLDEALHDDLAAWVERHYRDRLAPEDLADPLLVRESLTALDELTQLLGIGAVYPFQLN.

Residues 21-30 (AGLAHGNVAS), asparagine 112, and 139-140 (HR) each bind substrate. Glutamate 176 is a catalytic residue. Residue arginine 215 coordinates substrate. The active site involves histidine 251. The substrate site is built by aspartate 253 and asparagine 364. The active-site Nucleophile is cysteine 370.

It belongs to the succinylarginine dihydrolase family. In terms of assembly, homodimer.

The enzyme catalyses N(2)-succinyl-L-arginine + 2 H2O + 2 H(+) = N(2)-succinyl-L-ornithine + 2 NH4(+) + CO2. Its pathway is amino-acid degradation; L-arginine degradation via AST pathway; L-glutamate and succinate from L-arginine: step 2/5. Functionally, catalyzes the hydrolysis of N(2)-succinylarginine into N(2)-succinylornithine, ammonia and CO(2). This is N-succinylarginine dihydrolase from Chromohalobacter salexigens (strain ATCC BAA-138 / DSM 3043 / CIP 106854 / NCIMB 13768 / 1H11).